Consider the following 4841-residue polypeptide: Nonribosomal peptide synthetase 2 (4841 aa).

Residues 26–429 (VKPPNQNVAL…GRLSDGQVKL (404 aa)) form an adenylation 1 region. The Carrier 1 domain maps to 531-604 (EPVDEFESSL…DIIFAARRQI (74 aa)). S565 is subject to O-(pantetheine 4'-phosphoryl)serine. The condensation 1 stretch occupies residues 640–1042 (EEIIPCTPLQ…ILERPTQEIK (403 aa)). The tract at residues 1072–1463 (FEDVVRKHPE…GRIDDQVKLR (392 aa)) is adenylation 2. Residues 1587-1665 (EGDWSRMDLV…QLAKHLEGKP (79 aa)) enclose the Carrier 2 domain. S1625 carries the post-translational modification O-(pantetheine 4'-phosphoryl)serine. Residues 1702–2043 (ILPCTPLQEA…QTVWELEADS (342 aa)) form a condensation 2 region. One can recognise a Carrier 3 domain in the interval 2139-2212 (SEVELDVRQV…KIAAKLLENR (74 aa)). Position 2173 is an O-(pantetheine 4'-phosphoryl)serine (S2173). The condensation 3 stretch occupies residues 2248-2663 (AVLPCTPLQS…NHLATEDEAF (416 aa)). Residues 2695 to 3090 (AAVHPNKLAL…GRADDQVKLR (396 aa)) form an adenylation 3 region. The Carrier 4 domain occupies 3219-3293 (QDILVLLYDA…DLANCLAKAA (75 aa)). S3253 is modified (O-(pantetheine 4'-phosphoryl)serine). Positions 3333 to 3735 (IAPCSPLQEG…DLAAESPQSE (403 aa)) are condensation 4. Positions 3759–3838 (QNSFEWTSEA…KMITELASIT (80 aa)) constitute a Carrier 5 domain. S3799 carries the O-(pantetheine 4'-phosphoryl)serine modification. The tract at residues 3873-4242 (SVLPPTHLQE…VEAEAVSDSL (370 aa)) is condensation 5. The 77-residue stretch at 4318-4394 (IEWNQNEIGI…EMAQKADTKL (77 aa)) folds into the Carrier 6 domain. S4355 carries the post-translational modification O-(pantetheine 4'-phosphoryl)serine. Positions 4430 to 4726 (EVLPALPMQV…DIHLITSESR (297 aa)) are condensation 6.

This sequence belongs to the NRP synthetase family.

It participates in siderophore biosynthesis. In terms of biological role, nonribosomal peptide synthetase; part of the gene cluster that mediates the biosynthesis of hydroxamate-containing siderophores that play a critical role in virulence. Gibberella zeae produces extracellular coprogen-type siderophores as well as the intracellular siderophore ferricrocin. The role of extracellular siderophores is to supply iron to the fungus during plant infection, and the intracellular ferricrocin is required for intracellular iron distribution and storage with a crucial role in ascus and ascospore development. SID1 catalyzes the conversion of L-ornithine to N(5)-hydroxyornithine, the first step in the biosynthesis of all hydroxamate-containing siderophores. The assembly of extracellular coprogen-type siderophores is performed by the nonribosomal peptide synthetase (NRPS) NPS6 whereas the intracellular siderophore ferricrocin is assembled by NPS2. The sequence is that of Nonribosomal peptide synthetase 2 from Gibberella zeae (strain ATCC MYA-4620 / CBS 123657 / FGSC 9075 / NRRL 31084 / PH-1) (Wheat head blight fungus).